The sequence spans 540 residues: Chaperonin GroEL 1 (540 aa).

ATP-binding positions include 30–33 (TLGP), K51, 87–91 (DGTTT), G415, 480–482 (NAA), and D496.

This sequence belongs to the chaperonin (HSP60) family. In terms of assembly, forms a cylinder of 14 subunits composed of two heptameric rings stacked back-to-back. Interacts with the co-chaperonin GroES.

It localises to the cytoplasm. It carries out the reaction ATP + H2O + a folded polypeptide = ADP + phosphate + an unfolded polypeptide.. Together with its co-chaperonin GroES, plays an essential role in assisting protein folding. The GroEL-GroES system forms a nano-cage that allows encapsulation of the non-native substrate proteins and provides a physical environment optimized to promote and accelerate protein folding. The protein is Chaperonin GroEL 1 of Bradyrhizobium diazoefficiens (strain JCM 10833 / BCRC 13528 / IAM 13628 / NBRC 14792 / USDA 110).